A 1479-amino-acid chain; its full sequence is ABC transporter ecdL (1479 aa).

3 consecutive transmembrane segments (helical) span residues 32–52 (LLFEESILYLPPLLIAASVAL), 82–102 (LSNAAIAIGFVASPIFAWLSF), and 142–162 (IASIFATIVVCKVVLLVVEAM). Residues Asn-183 and Asn-234 are each glycosylated (N-linked (GlcNAc...) asparagine). Helical transmembrane passes span 251–271 (WGGFLPRLCLIGVNYAQPFLV) and 291–311 (SGLIAAYAIVYMGIAVATAAF). The ABC transmembrane type-1 1 domain occupies 258 to 535 (LCLIGVNYAQ…FVESLMGLRQ (278 aa)). N-linked (GlcNAc...) asparagine glycosylation occurs at Asn-345. The next 2 membrane-spanning stretches (helical) occupy residues 365-382 (LHETWASLIEIALSLWLL) and 391-411 (VAAAMVVLVCLLVSGALSGLL). Asn-427 carries an N-linked (GlcNAc...) asparagine glycan. The next 2 membrane-spanning stretches (helical) occupy residues 469 to 489 (LLVALVTLSYLSTTMAPTFAF) and 503 to 523 (PLLAAPAFSSLTIMTLLGQAV). The 229-residue stretch at 607 to 835 (IVLQNHTASW…GSSLRLEELV (229 aa)) folds into the ABC transporter 1 domain. 2 N-linked (GlcNAc...) asparagine glycosylation sites follow: Asn-611 and Asn-628. Residue 641-648 (GPIGSGKS) coordinates ATP. Asn-793 and Asn-797 each carry an N-linked (GlcNAc...) asparagine glycan. 5 helical membrane-spanning segments follow: residues 885-905 (TIGWGSWWIFIVLCSGFVVAL), 955-975 (LFAVWSALAITFFLGACLHLM), 1028-1048 (ALIGAVIALILCISAMAVIVY), 1052-1072 (YLAATIPGLLGLLYLVQMFYL), and 1135-1155 (IWLTLTLDIIVAFLAIILVSI). Residues 932 to 1193 (IWLKFWTEAN…LVYNWTALEN (262 aa)) enclose the ABC transmembrane type-1 2 domain. N-linked (GlcNAc...) asparagine glycosylation occurs at Asn-1161. Residues 1165 to 1185 (ASIGLALVNLIAFGANMKGLV) traverse the membrane as a helical segment. N-linked (GlcNAc...) asparagine glycosylation occurs at Asn-1187. An ABC transporter 2 domain is found at 1230-1461 (IKFKSVTASY…RSIFASLLRS (232 aa)). Residue 1264–1271 (GRTGCGKS) participates in ATP binding. The disordered stretch occupies residues 1460 to 1479 (RSGDEEPGNGHKHESEGEEE). Residues 1461–1479 (SGDEEPGNGHKHESEGEEE) are compositionally biased toward basic and acidic residues.

Belongs to the ABC transporter superfamily. ABCC family. Conjugate transporter (TC 3.A.1.208) subfamily.

It localises to the cell membrane. Its function is as follows. ABC transporter; part of the gene cluster that mediates the biosynthesis of echinocandin B, a fungal lipidated cyclic hexapeptide that acts as an antifungal agent. The protein is ABC transporter ecdL of Aspergillus rugulosus (Emericella rugulosa).